Here is a 720-residue protein sequence, read N- to C-terminus: Probable ATP-dependent RNA helicase DHX35 (720 aa).

The 166-residue stretch at 64-229 (LYLIENYQTV…FNQNETSDPA (166 aa)) folds into the Helicase ATP-binding domain. An ATP-binding site is contributed by 77–84 (GETGCGKS). A DEAH box motif is present at residues 176 to 179 (DEAH). Positions 261 to 438 (TVETVVKIHQ…PVILQLKALG (178 aa)) constitute a Helicase C-terminal domain.

The protein belongs to the DEAD box helicase family. DEAH subfamily. In terms of assembly, identified in the spliceosome C complex.

The catalysed reaction is ATP + H2O = ADP + phosphate + H(+). Its function is as follows. May be involved in pre-mRNA splicing. The sequence is that of Probable ATP-dependent RNA helicase DHX35 (DHX35) from Pongo abelii (Sumatran orangutan).